We begin with the raw amino-acid sequence, 151 residues long: 3-hydroxyacyl-[acyl-carrier-protein] dehydratase FabZ (151 aa).

The active site involves H54.

Belongs to the thioester dehydratase family. FabZ subfamily.

It localises to the cytoplasm. It catalyses the reaction a (3R)-hydroxyacyl-[ACP] = a (2E)-enoyl-[ACP] + H2O. Its function is as follows. Involved in unsaturated fatty acids biosynthesis. Catalyzes the dehydration of short chain beta-hydroxyacyl-ACPs and long chain saturated and unsaturated beta-hydroxyacyl-ACPs. This is 3-hydroxyacyl-[acyl-carrier-protein] dehydratase FabZ from Idiomarina loihiensis (strain ATCC BAA-735 / DSM 15497 / L2-TR).